We begin with the raw amino-acid sequence, 125 residues long: Nascent polypeptide-associated complex protein (125 aa).

The NAC-A/B domain occupies 9–76 (PRMMKQMQKM…SKNTSKTAEK (68 aa)).

The protein belongs to the NAC-alpha family. Homodimer. Interacts with the ribosome. Binds ribosomal RNA.

Its function is as follows. Contacts the emerging nascent chain on the ribosome. This Methanococcus vannielii (strain ATCC 35089 / DSM 1224 / JCM 13029 / OCM 148 / SB) protein is Nascent polypeptide-associated complex protein.